The chain runs to 871 residues: Protein pob1 (871 aa).

The SH3 domain maps to 2–65 (ASQRFVIALH…PASHVELISD (64 aa)). Residues 42-168 (WWEGEDEQGN…PSSDLSNFNT (127 aa)) form a disordered region. Residues 62-80 (LISDERSDSSDSRRGKEDF) show a composition bias toward basic and acidic residues. Composition is skewed to low complexity over residues 88–100 (TRSS…STSS) and 109–124 (LYSN…SILN). The segment covering 131 to 168 (SKPSVPSNFNSMFPSSKQEGPSPLLDNQPSSDLSNFNT) has biased composition (polar residues). Residues Ser224 and Ser225 each carry the phosphoserine modification. Tyr229 is modified (phosphotyrosine). Ser241 is modified (phosphoserine). Residues 250–313 (WSTEEVVEWL…LRKIQQLKDS (64 aa)) form the SAM domain. Positions 329-343 (ISVSQSSDSSSSIPK) are enriched in low complexity. Disordered stretches follow at residues 329-371 (ISVS…NRPT) and 384-670 (PDLD…KSKR). Composition is skewed to polar residues over residues 384 to 395 (PDLDSSPSTDWN) and 404 to 451 (TPSS…NSGL). Phosphoserine is present on residues Ser433, Ser439, and Ser440. Thr442 is subject to Phosphothreonine. Ser444 carries the post-translational modification Phosphoserine. Residues 456 to 467 (TEPISSPSTSSI) are compositionally biased toward low complexity. A compositionally biased stretch (polar residues) spans 492 to 511 (QPSSNVPTKFTGGASESSSV). Phosphoserine is present on Ser549. The segment covering 549-560 (SPSSISSRLPSS) has biased composition (low complexity). 2 stretches are compositionally biased toward polar residues: residues 561–574 (NLEQ…TKSP) and 583–606 (KASS…NYAT). In terms of domain architecture, PH spans 698 to 808 (TADCHGWMRK…WSSAFLKATV (111 aa)).

It localises to the cytoplasm. It is found in the membrane. Its function is as follows. Has a role in cell elongation and separation. The chain is Protein pob1 (pob1) from Schizosaccharomyces pombe (strain 972 / ATCC 24843) (Fission yeast).